The chain runs to 448 residues: ATP-dependent protease ATPase subunit HslU (448 aa).

Residues Val21, 63-68 (GVGKTE), Asp260, Glu326, and Arg398 contribute to the ATP site.

This sequence belongs to the ClpX chaperone family. HslU subfamily. As to quaternary structure, a double ring-shaped homohexamer of HslV is capped on each side by a ring-shaped HslU homohexamer. The assembly of the HslU/HslV complex is dependent on binding of ATP.

It is found in the cytoplasm. ATPase subunit of a proteasome-like degradation complex; this subunit has chaperone activity. The binding of ATP and its subsequent hydrolysis by HslU are essential for unfolding of protein substrates subsequently hydrolyzed by HslV. HslU recognizes the N-terminal part of its protein substrates and unfolds these before they are guided to HslV for hydrolysis. The protein is ATP-dependent protease ATPase subunit HslU of Sulfurihydrogenibium sp. (strain YO3AOP1).